The primary structure comprises 71 residues: Disintegrin tzabcanin (71 aa).

One can recognise a Disintegrin domain in the interval 1 to 71 (GEECDCGSPA…ADCPRNHFHA (71 aa)). 6 cysteine pairs are disulfide-bonded: C4/C19, C6/C14, C13/C36, C27/C33, C32/C57, and C45/C64. The short motif at 49–51 (RGD) is the Cell attachment site element.

It belongs to the venom metalloproteinase (M12B) family. P-II subfamily. P-IIa sub-subfamily. As to expression, expressed by the venom gland.

The protein resides in the secreted. Inhibits fibrinogen interaction with platelets. Acts by binding to alpha-IIb/beta-3 (ITGA2B/ITGB3) on the platelet surface and inhibits aggregation induced by ADP, thrombin, platelet-activating factor and collagen. Inhibits cell adhesion to vitronectin, probably by blocking its receptor integrin alpha-V/beta-3 (ITGAV/ITGB3), and to fibronectin in vitro. Shows little to no cytotoxicity in vitro. The sequence is that of Disintegrin tzabcanin from Crotalus tzabcan (Yucatan neotropical rattlesnake).